The chain runs to 436 residues: GTPase Der (436 aa).

EngA-type G domains are found at residues 3–167 (NIVA…PIKP) and 177–352 (PRFA…ENRQ). GTP contacts are provided by residues 9-16 (GRPNVGKS), 56-60 (DTGGY), 119-122 (NKVD), 183-190 (GRPNAGKS), 230-234 (DTAGI), and 295-298 (NKWD). The KH-like domain occupies 353–436 (QRISTSKFNE…VPIDIYIREK (84 aa)).

Belongs to the TRAFAC class TrmE-Era-EngA-EngB-Septin-like GTPase superfamily. EngA (Der) GTPase family. Associates with the 50S ribosomal subunit.

Functionally, GTPase that plays an essential role in the late steps of ribosome biogenesis. The polypeptide is GTPase Der (Flavobacterium psychrophilum (strain ATCC 49511 / DSM 21280 / CIP 103535 / JIP02/86)).